Here is a 206-residue protein sequence, read N- to C-terminus: Small ribosomal subunit protein uS4 (206 aa).

Positions 96-158 (GRLDNVVYRM…AKQQSRIKAA (63 aa)) constitute an S4 RNA-binding domain.

This sequence belongs to the universal ribosomal protein uS4 family. In terms of assembly, part of the 30S ribosomal subunit. Contacts protein S5. The interaction surface between S4 and S5 is involved in control of translational fidelity.

Its function is as follows. One of the primary rRNA binding proteins, it binds directly to 16S rRNA where it nucleates assembly of the body of the 30S subunit. In terms of biological role, with S5 and S12 plays an important role in translational accuracy. This chain is Small ribosomal subunit protein uS4, found in Vibrio atlanticus (strain LGP32) (Vibrio splendidus (strain Mel32)).